A 1729-amino-acid chain; its full sequence is 1,3-beta-glucan synthase component bgs1 (1729 aa).

Serine 23 carries the phosphoserine modification. The next 6 helical transmembrane spans lie at 378–398, 416–436, 448–468, 503–523, 546–566, and 577–597; these read WTAC…AVVF, SMLL…FIFA, LVVG…YSIT, FVSW…SYFF, YILG…LLYL, and YLWY…CLGI. A phosphoserine mark is found at serine 784 and serine 788. 8 helical membrane-spanning segments follow: residues 1180-1200, 1237-1257, 1337-1357, 1440-1460, 1484-1504, 1515-1535, 1550-1572, and 1678-1698; these read MVIM…GAMY, ILSI…CELG, MLLF…WITL, YGEI…FLFI, VAPL…GIML, YGVY…VVVF, LLGF…ICFL, and ATLY…PFVF.

This sequence belongs to the glycosyltransferase 48 family. Component of the 1,3-beta-glucan synthase (GS) complex, composed of at least the alternate catalytic subunits bgs1, bgs2, bgs3, and bgs4, and a regulatory subunit chr4.

It is found in the cell membrane. It localises to the cell septum. It carries out the reaction [(1-&gt;3)-beta-D-glucosyl](n) + UDP-alpha-D-glucose = [(1-&gt;3)-beta-D-glucosyl](n+1) + UDP + H(+). Alternate catalytic subunit of the 1,3-beta-glucan synthase (GS) complex. Synthesizes 1,3-beta-glucan, a major structural component of the fungal cell wall. Required for the assembly of the division septum and maintenance of cell polarity. In Schizosaccharomyces pombe (strain 972 / ATCC 24843) (Fission yeast), this protein is 1,3-beta-glucan synthase component bgs1 (bgs1).